Consider the following 521-residue polypeptide: MEELQLQGYLEKDGSRQQNFLYPLIFQEYIYTLAHDHGLNSSIFYEPMEIVGLGYDNKSSSVLVKRLITQMYQQNSLIYSMNDFNQNRFVGHNNSFYSNFYSQMVSEGFAVIVEIPFSLRLVPSSEEIQIPKSQNLRSIHSIFPFLEDKLSHLNYVLDILIPYPIHLEILVQILQCWIQDVPSLHFLRFFLHEFHNWNNLNLITPTKSISVFSKENKRLFWILYNSYVSEYEFLFVFLRKQSYYLRSTSSRAFLERTHFYVKIEHLIDVCHNHFQKILWFFKDSFMHYVRYKGKAILASRGTYLLIKKWKCYLVNFWQYNFHFWSKPYRIHINPFSNYSFYFLGYISSVLINPSAVKNQMLENFYLVDTLTQKFDTIVPVIPLIGSLSKAKFCTILGHPISKPIWAELSDSDIMDRFGRICRNLSHYHSGSSKKQSLYRIKYILRLSCARTLARKHKSTVRNLLQRLGSGLLEEFFTEEEQVISPIFPKTTLFPLHGSHRERIWYLDIIRINDLANYLDWS.

The protein belongs to the intron maturase 2 family. MatK subfamily.

The protein resides in the plastid. It is found in the chloroplast. Functionally, usually encoded in the trnK tRNA gene intron. Probably assists in splicing its own and other chloroplast group II introns. This chain is Maturase K, found in Trillium erectum (Beth root).